A 326-amino-acid polypeptide reads, in one-letter code: Phospho-N-acetylmuramoyl-pentapeptide-transferase (326 aa).

10 helical membrane passes run 2-22 (ILAT…FPYF), 51-71 (VPPM…LLWV), 73-93 (LTPE…LGFI), 113-133 (ILIQ…YSAE), 143-163 (GVII…IVGS), 175-195 (GLAA…AYIT), 199-219 (MNIT…LWFN), 225-245 (IFMG…TSVL), 250-270 (MLFA…IIQI), and 305-325 (VIVM…ITFL).

This sequence belongs to the glycosyltransferase 4 family. MraY subfamily. Requires Mg(2+) as cofactor.

The protein localises to the cell membrane. It carries out the reaction UDP-N-acetyl-alpha-D-muramoyl-L-alanyl-gamma-D-glutamyl-meso-2,6-diaminopimeloyl-D-alanyl-D-alanine + di-trans,octa-cis-undecaprenyl phosphate = di-trans,octa-cis-undecaprenyl diphospho-N-acetyl-alpha-D-muramoyl-L-alanyl-D-glutamyl-meso-2,6-diaminopimeloyl-D-alanyl-D-alanine + UMP. The protein operates within cell wall biogenesis; peptidoglycan biosynthesis. Catalyzes the initial step of the lipid cycle reactions in the biosynthesis of the cell wall peptidoglycan: transfers peptidoglycan precursor phospho-MurNAc-pentapeptide from UDP-MurNAc-pentapeptide onto the lipid carrier undecaprenyl phosphate, yielding undecaprenyl-pyrophosphoryl-MurNAc-pentapeptide, known as lipid I. The protein is Phospho-N-acetylmuramoyl-pentapeptide-transferase of Wolbachia sp. subsp. Drosophila simulans (strain wRi).